The chain runs to 100 residues: Urease subunit gamma (100 aa).

The protein belongs to the urease gamma subunit family. As to quaternary structure, heterotrimer of UreA (gamma), UreB (beta) and UreC (alpha) subunits. Three heterotrimers associate to form the active enzyme.

The protein localises to the cytoplasm. It catalyses the reaction urea + 2 H2O + H(+) = hydrogencarbonate + 2 NH4(+). It participates in nitrogen metabolism; urea degradation; CO(2) and NH(3) from urea (urease route): step 1/1. This chain is Urease subunit gamma, found in Yersinia rohdei.